We begin with the raw amino-acid sequence, 195 residues long: Imidazoleglycerol-phosphate dehydratase (195 aa).

This sequence belongs to the imidazoleglycerol-phosphate dehydratase family.

Its subcellular location is the cytoplasm. It carries out the reaction D-erythro-1-(imidazol-4-yl)glycerol 3-phosphate = 3-(imidazol-4-yl)-2-oxopropyl phosphate + H2O. The protein operates within amino-acid biosynthesis; L-histidine biosynthesis; L-histidine from 5-phospho-alpha-D-ribose 1-diphosphate: step 6/9. This chain is Imidazoleglycerol-phosphate dehydratase, found in Burkholderia vietnamiensis (strain G4 / LMG 22486) (Burkholderia cepacia (strain R1808)).